We begin with the raw amino-acid sequence, 227 residues long: MKFAVIVFPGSNCDVDMFHAIKDELGEEVDYVWHDRENLDEYDAILLPGGFSYGDYLRCGAISRFANAMKAVQKAAEQGKPILGVCNGFQILVESGLLPGALMRNENLKFMCRTVQLRVENNETMFTSQYEKNEVINIPIAHGEGNYYCDEATLKQLEENNQIAFRYVENPNGSVSDIAGIVNEKGNVLGMMPHPERAVDELLGGAEGLKVFQSILKQWRETYVVNA.

Residues 3-225 (FAVIVFPGSN…LKQWRETYVV (223 aa)) enclose the Glutamine amidotransferase type-1 domain. Cysteine 86 functions as the Nucleophile in the catalytic mechanism. Residues histidine 194 and glutamate 196 contribute to the active site.

Part of the FGAM synthase complex composed of 1 PurL, 1 PurQ and 2 PurS subunits.

Its subcellular location is the cytoplasm. It carries out the reaction N(2)-formyl-N(1)-(5-phospho-beta-D-ribosyl)glycinamide + L-glutamine + ATP + H2O = 2-formamido-N(1)-(5-O-phospho-beta-D-ribosyl)acetamidine + L-glutamate + ADP + phosphate + H(+). The catalysed reaction is L-glutamine + H2O = L-glutamate + NH4(+). The protein operates within purine metabolism; IMP biosynthesis via de novo pathway; 5-amino-1-(5-phospho-D-ribosyl)imidazole from N(2)-formyl-N(1)-(5-phospho-D-ribosyl)glycinamide: step 1/2. Its function is as follows. Part of the phosphoribosylformylglycinamidine synthase complex involved in the purines biosynthetic pathway. Catalyzes the ATP-dependent conversion of formylglycinamide ribonucleotide (FGAR) and glutamine to yield formylglycinamidine ribonucleotide (FGAM) and glutamate. The FGAM synthase complex is composed of three subunits. PurQ produces an ammonia molecule by converting glutamine to glutamate. PurL transfers the ammonia molecule to FGAR to form FGAM in an ATP-dependent manner. PurS interacts with PurQ and PurL and is thought to assist in the transfer of the ammonia molecule from PurQ to PurL. The polypeptide is Phosphoribosylformylglycinamidine synthase subunit PurQ (Bacillus mycoides (strain KBAB4) (Bacillus weihenstephanensis)).